The following is a 424-amino-acid chain: Histidine--tRNA ligase (424 aa).

Belongs to the class-II aminoacyl-tRNA synthetase family. As to quaternary structure, homodimer.

It is found in the cytoplasm. It catalyses the reaction tRNA(His) + L-histidine + ATP = L-histidyl-tRNA(His) + AMP + diphosphate + H(+). This Thioalkalivibrio sulfidiphilus (strain HL-EbGR7) protein is Histidine--tRNA ligase.